Consider the following 240-residue polypeptide: Ribonuclease PH (240 aa).

Phosphate-binding positions include Arg86 and 124–126; that span reads GTR.

Belongs to the RNase PH family. In terms of assembly, homohexameric ring arranged as a trimer of dimers.

It catalyses the reaction tRNA(n+1) + phosphate = tRNA(n) + a ribonucleoside 5'-diphosphate. Phosphorolytic 3'-5' exoribonuclease that plays an important role in tRNA 3'-end maturation. Removes nucleotide residues following the 3'-CCA terminus of tRNAs; can also add nucleotides to the ends of RNA molecules by using nucleoside diphosphates as substrates, but this may not be physiologically important. Probably plays a role in initiation of 16S rRNA degradation (leading to ribosome degradation) during starvation. This Rhodospirillum rubrum (strain ATCC 11170 / ATH 1.1.1 / DSM 467 / LMG 4362 / NCIMB 8255 / S1) protein is Ribonuclease PH.